We begin with the raw amino-acid sequence, 117 residues long: Large ribosomal subunit protein uL18 (117 aa).

Belongs to the universal ribosomal protein uL18 family. In terms of assembly, part of the 50S ribosomal subunit; part of the 5S rRNA/L5/L18/L25 subcomplex. Contacts the 5S and 23S rRNAs.

In terms of biological role, this is one of the proteins that bind and probably mediate the attachment of the 5S RNA into the large ribosomal subunit, where it forms part of the central protuberance. The sequence is that of Large ribosomal subunit protein uL18 from Sphingopyxis alaskensis (strain DSM 13593 / LMG 18877 / RB2256) (Sphingomonas alaskensis).